The following is a 406-amino-acid chain: Argininosuccinate synthase (406 aa).

ATP is bound by residues alanine 12–serine 20 and alanine 39. The L-citrulline site is built by tyrosine 90 and serine 95. Glycine 120 contacts ATP. L-aspartate contacts are provided by threonine 122, asparagine 126, and aspartate 127. Asparagine 126 lines the L-citrulline pocket. L-citrulline-binding residues include arginine 130, serine 179, serine 188, glutamate 264, and tyrosine 276.

The protein belongs to the argininosuccinate synthase family. Type 1 subfamily. Homotetramer.

It localises to the cytoplasm. The catalysed reaction is L-citrulline + L-aspartate + ATP = 2-(N(omega)-L-arginino)succinate + AMP + diphosphate + H(+). It participates in amino-acid biosynthesis; L-arginine biosynthesis; L-arginine from L-ornithine and carbamoyl phosphate: step 2/3. The sequence is that of Argininosuccinate synthase from Geotalea daltonii (strain DSM 22248 / JCM 15807 / FRC-32) (Geobacter daltonii).